The sequence spans 1522 residues: Histone-lysine N-methyltransferase EZH2 (1522 aa).

A disordered region spans residues 1–196 (MSPARGDANA…PKTPTPKNTE (196 aa)). Residues 39–61 (NRENLRDRDRADKLEKLEKDAHA) show a composition bias toward basic and acidic residues. 2 stretches are compositionally biased toward low complexity: residues 64–76 (QTQT…PVTV) and 103–130 (RGST…SPSL). Residues 141-162 (ILASRTSRFSNRTGIRDSQSPS) show a composition bias toward polar residues. Positions 180-195 (ATSNTPAPKTPTPKNT) are enriched in low complexity. The tract at residues 190-220 (PTPKNTEWTVDKIASALSVLAEEVPQNHSRL) is SBD domain. The segment at 221–250 (VNFLLEETEKRAPQPRHLSKTDPFAHMKSK) is EBD domain. Residues 251 to 300 (AIDANRPRPEGVPTMDVKFKQHSGEYGKSRNSGRRFQYPVVCIKPDREPV) form a BAM domain region. The tract at residues 301–320 (PPYRFHHAEIRKNILALNSQ) is SAL domain. The interval 321 to 360 (LNFVPHLRDVDPNSAEEQKYSAWLMDLENLDSKSGFKIQP) is SRM domain. Positions 361-480 (RSQKIAKRAQ…PIFDNKRAKD (120 aa)) are SANT1L domain. Positions 406-426 (PESDDSMTPQQKSNLLDTYSD) are disordered. Over residues 411 to 422 (SMTPQQKSNLLD) the composition is skewed to polar residues. Positions 481–560 (APGSQKPPDE…EQRQKTEGGS (80 aa)) are MCSS domain. The Zn(2+) site is built by Cys508, Cys511, Cys516, His518, Cys570, Cys574, Cys615, Cys625, Cys685, His687, Cys691, Cys697, Cys699, Cys709, Cys713, Cys715, Cys720, Cys727, Cys729, Cys736, Cys746, Cys748, Cys755, Cys760, Cys763, and Cys784. Residues 561 to 650 (ANAPPAHPPC…PVEPRTIPKQ (90 aa)) form an SANT2L domain region. In terms of domain architecture, CXC spans 658–780 (RRKKQLMSDW…PENAYDEVLH (123 aa)). The SET domain maps to 795–919 (KAVVLGKSQL…AGEELFFNYG (125 aa)). Positions 809, 852, 854, and 855 each coordinate S-adenosyl-L-homocysteine. Residues Tyr809, Lys852, Ser854, Tyr855, Asn880, His881, and Thr926 each contribute to the S-adenosyl-L-methionine site. Position 881 (His881) interacts with S-adenosyl-L-homocysteine. Lys927 is a binding site for S-adenosyl-L-homocysteine. The tract at residues 933–1522 (NEQSGAETTP…KPARYRDEGE (590 aa)) is disordered. Over residues 935 to 946 (QSGAETTPQQPK) the composition is skewed to polar residues. Positions 971 to 988 (GFDDDDRDGNDSDPDDLW) are enriched in acidic residues. The segment covering 992–1024 (QQQQQQQQQQQQQQQQQQQQQQQQQQQQQQQQQ) has biased composition (low complexity). Positions 1025-1038 (AQKPQPSTSHQPQS) are enriched in polar residues. Over residues 1053–1066 (SPDKQLRRENHDAQ) the composition is skewed to basic and acidic residues. The segment covering 1072 to 1091 (QFQQQEQQQQQQQQQQQQQQ) has biased composition (low complexity). The span at 1127–1136 (DSSSGGSANE) shows a compositional bias: polar residues. A compositionally biased stretch (basic residues) spans 1142-1162 (KPSRRGGARPGAGRKPKHRPP). Basic and acidic residues-rich tracts occupy residues 1207-1221 (SDSK…TDKE) and 1228-1238 (VNEKDREKGRD). Residues 1255–1299 (KSAPSPAKKQASSPTKISDSNRTTSKNTSSNNNNNTNNNNNNNNN) are compositionally biased toward low complexity. The segment covering 1316-1330 (HLTNSQPAALSPSAT) has biased composition (polar residues). Low complexity-rich tracts occupy residues 1355-1385 (STMT…SSSS) and 1415-1428 (SSSL…SVFS). Residues 1455–1464 (SGLNSTSLSQ) show a composition bias toward polar residues. Basic and acidic residues predominate over residues 1465 to 1494 (ERGEKHEKHEKEKPKEKKGEKERERERDRS).

It belongs to the class V-like SAM-binding methyltransferase superfamily. Histone-lysine methyltransferase family. EZ subfamily. As to quaternary structure, component of the polycomb repressive complex 2 (PRC2) that consists of four core subunits icluding EZH2, EED, SUZ12, and RBBP4, among which EZH2 is the catalytic subunit and which minimally requires EED and SUZ12 for catalysis.

It localises to the nucleus. The enzyme catalyses L-lysyl(27)-[histone H3] + 3 S-adenosyl-L-methionine = N(6),N(6),N(6)-trimethyl-L-lysyl(27)-[histone H3] + 3 S-adenosyl-L-homocysteine + 3 H(+). Its activity is regulated as follows. The end product of PRC2 catalysis, H3K27me3, interacts with EED to stimulate the enzymatic activity of PRC2 allosterically. The enzymatic activity of PRC2 is regulated in a very complex manner and PCR2 can adopt different stages including the autoinhibited (A); SAM-bound autoinhibited (A'), basal (B), and H3K27me3-stimulated (S) stages. Actictivity is inhibited by pyridone inhibitors such as GSK126. Catalytic subunit of the of the Polycomb Repressive Complex 2 (PRC2), a histone H3 lysine methyltransferase responsible for generating mono-, di-, and tri-methylation on Lys27 (H3K27me1, H3K27me2 and H3K27me3). The tri-methylated form is known to be critical in gene repression, and its proper placement is essential in defining repression patterns during development. The PRC2 complex interacts with thousands of RNA species in vivo, but the physiological function of RNA binding has still to be determined. The sequence is that of Histone-lysine N-methyltransferase EZH2 from Chaetomium thermophilum (strain DSM 1495 / CBS 144.50 / IMI 039719) (Thermochaetoides thermophila).